A 193-amino-acid chain; its full sequence is Rho-related GTP-binding protein RhoA-A (193 aa).

GTP contacts are provided by residues Gly-12–Thr-19, Phe-30–Thr-37, Asp-59–Gln-63, Asn-117–Asp-120, and Ser-160–Lys-162. (Microbial infection) O-linked (GlcNAc) tyrosine; by Yersinia Afp18 glycosylation occurs at Tyr-34. Position 190 is a cysteine methyl ester (Cys-190). A lipid anchor (S-geranylgeranyl cysteine) is attached at Cys-190. The propeptide at Ala-191 to Leu-193 is removed in mature form.

The protein belongs to the small GTPase superfamily. Rho family. In terms of processing, (Microbial infection) Glycosylated at Tyr-34 by Yersinia ruckeri toxin Afp18. Mono-O-GlcNAcylation by Afp18 inhibits RhoA activation by guanine nucleotide exchange factors and blocks RhoA signaling.

It localises to the cell membrane. Functionally, regulates a signal transduction pathway linking plasma membrane receptors to the assembly of focal adhesions and actin stress fibers. The sequence is that of Rho-related GTP-binding protein RhoA-A from Danio rerio (Zebrafish).